We begin with the raw amino-acid sequence, 111 residues long: Large ribosomal subunit protein uL22 (111 aa).

It belongs to the universal ribosomal protein uL22 family. As to quaternary structure, part of the 50S ribosomal subunit.

This protein binds specifically to 23S rRNA; its binding is stimulated by other ribosomal proteins, e.g. L4, L17, and L20. It is important during the early stages of 50S assembly. It makes multiple contacts with different domains of the 23S rRNA in the assembled 50S subunit and ribosome. Functionally, the globular domain of the protein is located near the polypeptide exit tunnel on the outside of the subunit, while an extended beta-hairpin is found that lines the wall of the exit tunnel in the center of the 70S ribosome. This Fusobacterium nucleatum subsp. nucleatum (strain ATCC 25586 / DSM 15643 / BCRC 10681 / CIP 101130 / JCM 8532 / KCTC 2640 / LMG 13131 / VPI 4355) protein is Large ribosomal subunit protein uL22.